Consider the following 217-residue polypeptide: Response regulator RR06 (217 aa).

A Response regulatory domain is found at 2–115 (NILVADDEEM…LLVKRIKALI (114 aa)). Asp-51 is subject to 4-aspartylphosphate. A DNA-binding region (ompR/PhoB-type) is located at residues 122–217 (EDIWRYQDVT…VKNVGYKISL (96 aa)).

In terms of processing, phosphorylated at threonine residues by StkP; threonine phosphorylation enhances RR06 binding to DNA and may also increase expression of CbpA. May be de-phosphorylated by PhpP.

Member of the two-component regulatory system HK06/RR06 involved in regulation of target genes, including choline-binding protein CbpA. Binds to the promoter region of CbpA and directly activates transcription. This Streptococcus pneumoniae serotype 2 (strain D39 / NCTC 7466) protein is Response regulator RR06.